The following is a 229-amino-acid chain: MAGHDSGNAKRGRSPSFGVFVRKPVERTSAKGTSDGAVDSQAIRIDAAQSWPDDAVEVGAVVDAYGLKGWVKLAAHAGAGRGGDALLKARDWWLQKGAERKFARVTQAKLHGDTVVAHPDGSVDRDTALALRGARVFVRRGDFPALAADEFYWVDLIGLDVVNEAGVALGKIADMIDNGVHSIMRVEYPATGKDGRPKTGERLIPFVGVYVKAVEQAAGRVVVDWEADY.

The segment at 1–37 (MAGHDSGNAKRGRSPSFGVFVRKPVERTSAKGTSDGA) is disordered. The PRC barrel domain maps to 148 to 229 (ADEFYWVDLI…RVVVDWEADY (82 aa)).

The protein belongs to the RimM family. Binds ribosomal protein uS19.

The protein resides in the cytoplasm. An accessory protein needed during the final step in the assembly of 30S ribosomal subunit, possibly for assembly of the head region. Essential for efficient processing of 16S rRNA. May be needed both before and after RbfA during the maturation of 16S rRNA. It has affinity for free ribosomal 30S subunits but not for 70S ribosomes. In Burkholderia pseudomallei (strain 668), this protein is Ribosome maturation factor RimM.